The following is a 395-amino-acid chain: Flap endonuclease 1 (395 aa).

Residues M1 to K104 form an N-domain region. D34 is a Mg(2+) binding site. DNA contacts are provided by R47 and R70. Mg(2+)-binding residues include D86, E158, E160, D179, and D181. An I-domain region spans residues D122 to H253. A DNA-binding site is contributed by E158. Residues G231 and D233 each contribute to the DNA site. D233 contributes to the Mg(2+) binding site. The interval Q341–F349 is interaction with PCNA. The tract at residues R344–A395 is disordered. A compositionally biased stretch (basic and acidic residues) spans K365–A386.

Belongs to the XPG/RAD2 endonuclease family. FEN1 subfamily. In terms of assembly, interacts with PCNA. Three molecules of FEN1 bind to one PCNA trimer with each molecule binding to one PCNA monomer. PCNA stimulates the nuclease activity without altering cleavage specificity. It depends on Mg(2+) as a cofactor. Post-translationally, phosphorylated. Phosphorylation upon DNA damage induces relocalization to the nuclear plasma.

Its subcellular location is the nucleus. It localises to the nucleolus. The protein resides in the nucleoplasm. The protein localises to the mitochondrion. Functionally, structure-specific nuclease with 5'-flap endonuclease and 5'-3' exonuclease activities involved in DNA replication and repair. During DNA replication, cleaves the 5'-overhanging flap structure that is generated by displacement synthesis when DNA polymerase encounters the 5'-end of a downstream Okazaki fragment. It enters the flap from the 5'-end and then tracks to cleave the flap base, leaving a nick for ligation. Also involved in the long patch base excision repair (LP-BER) pathway, by cleaving within the apurinic/apyrimidinic (AP) site-terminated flap. Acts as a genome stabilization factor that prevents flaps from equilibrating into structures that lead to duplications and deletions. Also possesses 5'-3' exonuclease activity on nicked or gapped double-stranded DNA, and exhibits RNase H activity. Also involved in replication and repair of rDNA and in repairing mitochondrial DNA. The protein is Flap endonuclease 1 of Fusarium vanettenii (strain ATCC MYA-4622 / CBS 123669 / FGSC 9596 / NRRL 45880 / 77-13-4) (Fusarium solani subsp. pisi).